The primary structure comprises 135 residues: Large ribosomal subunit protein uL18 (135 aa).

Residues M1–S25 are disordered.

Belongs to the universal ribosomal protein uL18 family. Part of the 50S ribosomal subunit; part of the 5S rRNA/L5/L18/L25 subcomplex. Contacts the 5S and 23S rRNAs.

This is one of the proteins that bind and probably mediate the attachment of the 5S RNA into the large ribosomal subunit, where it forms part of the central protuberance. In Nocardia farcinica (strain IFM 10152), this protein is Large ribosomal subunit protein uL18.